The following is a 316-amino-acid chain: uncharacterized protein (316 aa).

Over 1 to 70 the chain is Cytoplasmic; that stretch reads SFAYSGNSES…NNDEIGIWNY (70 aa). The chain crosses the membrane as a helical span at residues 71 to 91; that stretch reads ISVAEMGGVLLFLSYWIWTCL. A topological domain (lumenal) is located at residue histidine 92. A helical transmembrane segment spans residues 93-113; that stretch reads FSKIIFPAQKVICLYIFLFAL. Over 114-170 the chain is Cytoplasmic; the sequence is NQTLQECIEEYVFSSECIKYRQFYSVYEIIDFLRTNFYRLFVIYCALGFGITRTVPK. A helical transmembrane segment spans residues 171–191; it reads YLMIKGISIVIALCSVYWISL. The Lumenal portion of the chain corresponds to 192–194; that stretch reads YKD. Residues 195 to 215 form a helical membrane-spanning segment; the sequence is VYVVSEIFDMIQYEVSPAIWV. The Cytoplasmic segment spans residues 216-245; the sequence is YSICHLLKQCTSVTTYENASKARFFRRMLN. Residues 246 to 266 form a helical membrane-spanning segment; it reads AFIFIFCASPMLHYLSNIIFG. The Lumenal portion of the chain corresponds to 267-316; that stretch reads NFDYRLSVIIGDLFTFMEKIAFPCYIMFPTHNEALAYNRNVAEEAQEKMI.

Belongs to the UPF0742 family.

Its subcellular location is the endoplasmic reticulum. It is found in the membrane. This is an uncharacterized protein from Schizosaccharomyces pombe (strain 972 / ATCC 24843) (Fission yeast).